The primary structure comprises 321 residues: 2-oxoglutarate-dependent dioxygenase frbH (321 aa).

Positions 77–97 (SRNSDTHGYEPVATSTGAQDD) are disordered. The Fe2OG dioxygenase domain maps to 169–273 (ESLSTLSMFR…RFSIAYFLRA (105 aa)). Residues histidine 194, aspartate 196, and histidine 251 each coordinate Fe cation. 2-oxoglutarate is bound at residue arginine 264.

It belongs to the iron/ascorbate-dependent oxidoreductase family.

It participates in antifungal biosynthesis. In terms of biological role, 2-oxoglutarate-dependent dioxygenase; part of the gene cluster that mediates the biosynthesis of the antifungal antibiotic FR901469, an inhibitor of beta-1,3-glucansynthase, exerting antifungal activity against the pathogenes Candida albicans and Aspergillus fumigatus. FR901469 is a cyclic depsipeptide containing 12 amino acid residues and a fatty acid chain. The NRPS frbI contains 12 modules responsible for the formation of the depsipeptide backbone which is denoted as Acyl-Thr-Ala-Tyr-Val-4OHPro-Thr-Thr-3OHPro-threo3OHGln-Gly-Thr-Orn-OH (C71H116N14O23). The PKS frbB is probably involved in the production of the hydrocarbon chain, and the acyl-CoA ligase frbC might be involved in the transport of the chain to the peptide ptoduct of frbI. Because FR901469 contains 3 hydroxylated amino acid residues, the 3 oxygenases frbA, frbH, and frbJ might be participating in amino acid hydroxylation. As no thioesterase domains were detected in frbI or frbB, the thioesterases frbD and frbE may instead release and cyclize the products of the NRPS and PKS, respectively. In Dothideomycetidae sp. (strain 11243) (Fungal sp. (strain No.11243)), this protein is 2-oxoglutarate-dependent dioxygenase frbH.